The following is a 71-amino-acid chain: Small ribosomal subunit protein bS21 (71 aa).

The segment covering alanine 48–lysine 59 has biased composition (basic residues). The tract at residues alanine 48–tyrosine 71 is disordered. The span at leucine 60 to tyrosine 71 shows a compositional bias: basic and acidic residues.

It belongs to the bacterial ribosomal protein bS21 family.

In Aeromonas hydrophila subsp. hydrophila (strain ATCC 7966 / DSM 30187 / BCRC 13018 / CCUG 14551 / JCM 1027 / KCTC 2358 / NCIMB 9240 / NCTC 8049), this protein is Small ribosomal subunit protein bS21.